The chain runs to 202 residues: Na(+)-translocating NADH-quinone reductase subunit E (202 aa).

6 consecutive transmembrane segments (helical) span residues Ser11–Val31, Leu41–Phe61, Phe81–Val101, Gly114–Val134, Leu144–Ile164, and Leu180–Ile200.

The protein belongs to the NqrDE/RnfAE family. As to quaternary structure, composed of six subunits; NqrA, NqrB, NqrC, NqrD, NqrE and NqrF.

It is found in the cell inner membrane. The catalysed reaction is a ubiquinone + n Na(+)(in) + NADH + H(+) = a ubiquinol + n Na(+)(out) + NAD(+). Its function is as follows. NQR complex catalyzes the reduction of ubiquinone-1 to ubiquinol by two successive reactions, coupled with the transport of Na(+) ions from the cytoplasm to the periplasm. NqrA to NqrE are probably involved in the second step, the conversion of ubisemiquinone to ubiquinol. The sequence is that of Na(+)-translocating NADH-quinone reductase subunit E from Psychromonas ingrahamii (strain DSM 17664 / CCUG 51855 / 37).